A 489-amino-acid chain; its full sequence is MSADFGLIGLAVMGQNLILNAADHGFTVCAYNRTQSKVDHFLANEAKGKSIIGATSIEDFISKLKRPRKVMLLVKAGAPVDALINQIVPLLEKGDIIIDGGNSHFPDSNRRYEELKKKGILFVGSGVSGGEEGARYGPSLMPGGSEEAWPHIKNIFQSISAKSDGEPCCEWVGPAGAGHYVKMVHNGIEYGDMQLICEAYDIMKRLGGFTDKEISDVFAKWNNGVLDSFLVEITRDILKFDDVDGKPLVEKIMDTAGQKGTGKWTAINALDLGMPVTLIGEAVFARCLSALKNERIRASKVLPGPEVPKDAVKDREQFVDDLEQALYASKIISYAQGFMLIREAAATYGWKLNNPAIALMWRGGCIIRSVFLGQITKAYREEPDLENLLFNKFFADAVTKAQSGWRKSIALATTYGIPTPAFSTALSFYDGYRSERLPANLLQAQRDYFGAHTFRVLPECASDNLPVDKDIHINWTGHGGNVSSSTYQA.

NADP(+) is bound by residues 9–14 and 32–34; these read GLAVMG and NRT. The residue at position 50 (S50) is a Phosphoserine. NADP(+) is bound by residues 74-76 and N102; that span reads VKA. Substrate is bound by residues N102 and 128–130; that span reads SGG. K182 functions as the Proton acceptor in the catalytic mechanism. 185-186 is a binding site for substrate; sequence HN. Residue E189 is the Proton donor of the active site. Positions 190, 259, 286, 446, and 452 each coordinate substrate.

This sequence belongs to the 6-phosphogluconate dehydrogenase family. As to quaternary structure, homodimer.

It is found in the cytoplasm. It carries out the reaction 6-phospho-D-gluconate + NADP(+) = D-ribulose 5-phosphate + CO2 + NADPH. The protein operates within carbohydrate degradation; pentose phosphate pathway; D-ribulose 5-phosphate from D-glucose 6-phosphate (oxidative stage): step 3/3. Catalyzes the oxidative decarboxylation of 6-phosphogluconate to ribulose 5-phosphate and CO(2), with concomitant reduction of NADP to NADPH. The chain is 6-phosphogluconate dehydrogenase, decarboxylating 1 (GND1) from Saccharomyces cerevisiae (strain ATCC 204508 / S288c) (Baker's yeast).